The following is a 453-amino-acid chain: Bifunctional protein GlmU (453 aa).

The segment at 1–225 is pyrophosphorylase; it reads MNIVILAAGT…EWETLGVNSK (225 aa). Residues 6-9, lysine 20, glutamine 71, 76-77, 98-100, glycine 135, glutamate 150, asparagine 165, and asparagine 223 contribute to the UDP-N-acetyl-alpha-D-glucosamine site; these read LAAG, GT, and YGD. Residue aspartate 100 coordinates Mg(2+). A Mg(2+)-binding site is contributed by asparagine 223. The tract at residues 226–246 is linker; the sequence is AQLAELERIHQRNVADALLVD. An N-acetyltransferase region spans residues 247–453; the sequence is GVTLADPARV…GYVRPVKKKS (207 aa). UDP-N-acetyl-alpha-D-glucosamine contacts are provided by arginine 329 and lysine 347. Histidine 359 acts as the Proton acceptor in catalysis. UDP-N-acetyl-alpha-D-glucosamine-binding residues include tyrosine 362 and asparagine 373. Residues alanine 376, 382–383, serine 401, and alanine 419 each bind acetyl-CoA; that span reads NY.

It in the N-terminal section; belongs to the N-acetylglucosamine-1-phosphate uridyltransferase family. The protein in the C-terminal section; belongs to the transferase hexapeptide repeat family. Homotrimer. The cofactor is Mg(2+).

It is found in the cytoplasm. It catalyses the reaction alpha-D-glucosamine 1-phosphate + acetyl-CoA = N-acetyl-alpha-D-glucosamine 1-phosphate + CoA + H(+). The catalysed reaction is N-acetyl-alpha-D-glucosamine 1-phosphate + UTP + H(+) = UDP-N-acetyl-alpha-D-glucosamine + diphosphate. It participates in nucleotide-sugar biosynthesis; UDP-N-acetyl-alpha-D-glucosamine biosynthesis; N-acetyl-alpha-D-glucosamine 1-phosphate from alpha-D-glucosamine 6-phosphate (route II): step 2/2. The protein operates within nucleotide-sugar biosynthesis; UDP-N-acetyl-alpha-D-glucosamine biosynthesis; UDP-N-acetyl-alpha-D-glucosamine from N-acetyl-alpha-D-glucosamine 1-phosphate: step 1/1. It functions in the pathway bacterial outer membrane biogenesis; LPS lipid A biosynthesis. Functionally, catalyzes the last two sequential reactions in the de novo biosynthetic pathway for UDP-N-acetylglucosamine (UDP-GlcNAc). The C-terminal domain catalyzes the transfer of acetyl group from acetyl coenzyme A to glucosamine-1-phosphate (GlcN-1-P) to produce N-acetylglucosamine-1-phosphate (GlcNAc-1-P), which is converted into UDP-GlcNAc by the transfer of uridine 5-monophosphate (from uridine 5-triphosphate), a reaction catalyzed by the N-terminal domain. The chain is Bifunctional protein GlmU from Burkholderia ambifaria (strain ATCC BAA-244 / DSM 16087 / CCUG 44356 / LMG 19182 / AMMD) (Burkholderia cepacia (strain AMMD)).